The primary structure comprises 3357 residues: MLINMKGILWMCSTLLLTHALHQAKMETSPPVKGSLSGKVVLPCHFSTLPTLPPNYNTSEFLRIKWSKMEVDKNGKDIKETTVLVAQNGNIKIGQDYKGRVSVPTHPDDVGDASLTMVKLRASDAAVYRCDVMYGIEDTQDTMSLAVDGVVFHYRAATSRYTLNFAAAQQACLDIGAVIASPEQLFAAYEDGFEQCDAGWLSDQTVRYPIRAPREGCYGDMMGKEGVRTYGFRSPQETYDVYCYVDHLDGDVFHITAPSKFTFEEAEAECTSRDARLATVGELQAAWRNGFDQCDYGWLSDASVRHPVTVARAQCGGGLLGVRTLYRFENQTCFPLPDSRFDAYCFKPKQNISEATTIEMNILAETSSPSLSKEPHMVPDRATPVIPLATELPIFTTHFPPAGNIVNSEQKSVVYSQAITGRLATESPTTTRNTINSWDLNDSLASGSGPLGMPDISEIKEEELRSTTVISQHATGSQAVITEDTQTHESVSQIEQIEVGPLVTSMEITNHISLKELPEKNKTPYESTEVTLEHTTEMPTVSASPELATTSHYGFTLREDDREDRTLTVRSDQSTRVFSQIPEVITVSKTSEDTTYSQLGDLESISTSTITMLGTDRSLIDKEKEPKTNGKVTEDEFGQSQPTTTFPSQHLTEVELLPYSGDTTSVEGISTVIYPSLQTDVTQGRERTETPRPELKKDPYTVDEIPEKVTKDPFIGKTEEVFSGMPLSTSSSESSVERTESVSPALTIEKLTGKPTEARDVEEMTTLTRLETDVTKSDKDVTRVHLTHSTLNVEVVTVSKWPGDEDNSTSKPLPSTEHAGFTKLPPVPLSTIGINGKDKEIPSFTDGGGEYTLFPDGTPKPLEKVSEEDLASGELTVTFHTSTSIGSAEKSASGEPTTGDRFLPTTSTEDQVINATAEGSALGEDTEASKPLFTGPPFVHTSDVEELAFVNYSSTQEPTTYVDISHTSPLSIIPKTEWSVLETSVPLEDEILGKSDQDILEQTHLEATMSPGALRTTGVSQGETQEEPQTPGSPFPTFSSTAVMAKETTAFEEGEGSTYTPSEGRLMTGSERVPGLETTPVGTSYPPGAITDQEVEMDTMVTLMSTIRPTVVSSTESEVIYEAEGSSPTEFASTLRPFQTHVTQLMEETTEEGKKASLDYTDLGSGLFEPRATELPKFPSTPSDISVFTAIDSLHRTPPLSPSSSFTEEQRVFEEESSEKTTGDILPGESVTQHPVTTLIDIVAMKTESDIDHMTSKPPVTQPTRPSVVERKTTSKTQELSTSTPAAGTKFHPDINVYIIEVRENKTGRLSDMIVSGHPIDSESKEEEPCSEETDPLHDLFAEILPELPDSFEIDIYHSEEDEDGEEDCVNATDVTTTPSVQYINGKQLVTTVPKDPEAAEARRGQYESVAPSQNFPDSSATDTHQFILAETESSTTMQFKKSKEGTELLEITWKPETYPETPDHVSSGEPDVFPTLSSHDGKTTRWSESITESSPNLENPVHKQPKPVPLFPEESSGEGAIEQASQETILSRATEVALGKETDQSPTLSTSSILSSSVSVNVLEEEPLTLTGISQTDESMSTIESWVEITPSQTVKFSESSSAPIIEGSGEVEENKNKIFNMVTDLPQRDPTDTLSPLDMSKIMITNHHIYIPATIAPLDSKLPSPDARPTTVWNSNSTSEWVSDKSFEGRKKKENEDEEGAVNAAHQGEVRAATERSDHLLLTPELESSNVDASSDLATWEGFILETTPTESEKEMANSTPVFRETIGVANVEAQPFEHSSSSHPRVQEELTTLSGNPPSLFTDLGSGDASTGMELITASLFTLDLESETKVKKELPSTPSPSVEISSSFEPTGLTPSTVLDIEIAGVMSQTSQKTLISEISGKPTSQSGVRDLYTGFPMGEDFSGDFSEYPTVSYPTMKEETVGMGGSDDERVRDTQTSSSIPTTSDNIYPVPDSKGPDSTVASTTAFPWEEVMSSAEGSGEQLASVRSSVGPVLPLAVDIFSGTESPYFDEEFEEVAAVTEANERPTVLPTAASGNTVDLTENGYIEVNSTMSLDFPQTMEPSKLWSKPEVNLDKQEIGRETVTKEKAQGQKTFESLHSSFAPEQTILETQSLIETEFQTSDYSMLTTLKTYITNKEVEEEGMSIAHMSTPGPGIKDLESYTTHPEAPGKSHSFSATALVTESGAARSVLMDSSTQEEESIKLFQKGVKLTNKESNADLSFSGLGSGGALPPLPTTSVNLTDMKQIISTLYAETSHMESLGTSILGDKMEDHERMEDVSSNEVRMLISKIGSISQDSTEALDTTLSHTGTEEPTTSTLPFVKLMDLERSPKQDPSGGKRKPKTHRPQTMSGLISNENSSASEAEEGATSPTAFLPQTYSVEMTKHFAPSESQPSDLFNVNSGEGSGEVDTLDLVYTSGTTQASSQGDSMLASHGFLEKHPEVSKTEAGATDVSPTASAMFLHHSEYKSSLYPTSTLPSTEPYKSPSEGIEDGLQDNIQFEGSTLKPSRRKTTESIIIDLDKEDSKDLGLTITESAIVKSLPELTSDKNIIIDIDHTKPVYEYIPGIQTDLDPEIKLESHGSSEESLQVQEKYEGAVTLSPTEESFEGSGDALLAGYTQAIYNESVTPNDGKQAEDISFSFATGIPVSSTETELHTFFPTASTLHIPSKLTTASPEIDKPNIEAISLDDIFESSTLSDGQAIADQSEVISTLGHLEKTQEEYEEKKYGGPSFQPEFFSGVGEVLTDPPAYVSIGSTYLIAQTLTELPNVVRPSDSTHYTEATPEVSSLAELSPQIPSSPFPVYVDNGVSKFPEVPHTSAQPVSTVTSSQKSIESPFKEVHANIEETIKPLGGNVHRTEPPSMSRDPALDVSEDESKHKLLEELETSPTKPETSQDFPNKAKDHIPGETVGMLAGIRTTESEPVITADDMELGGATQQPHSASAAFRVETGMVPQPIQQEPERPTFPSLEINHETHTSLFGESILATSEKQVSQKILDNSNQATVSSTLDLHTAHALSPFSILDNSNETAFLIGISEESVEGTAVYLPGPDLCKTNPCLNGGTCYPTETSYVCTCAPGYSGDQCELDFDECHSNPCRNGATCVDGFNTFRCLCLPSYVGALCEQDTETCDYGWHKFQGQCYKYFAHRRTWDAAERECRLQGAHLTSILSHEEQMFVNRVGHDYQWIGLNDKMFEHDFRWTDGSALQYENWRPNQPDSFFSAGEDCVVIIWHENGQWNDVPCNYHLTYTCKKGTVACGQPPVVENAKTFGKMKPRYEINSLIRYHCKDGFIQRHLPTIRCLGNGRWAMPKITCMNPSAYQRTYSKKYLKNSSSAKDNSINTSKHEHRWSRRQETRR.

The signal sequence occupies residues 1 to 23 (MLINMKGILWMCSTLLLTHALHQ). Residues 24–146 (AKMETSPPVK…EDTQDTMSLA (123 aa)) enclose the Ig-like V-type domain. Disulfide bonds link C44-C130, C172-C243, C196-C217, C270-C333, and C294-C315. N-linked (GlcNAc...) asparagine glycosylation occurs at N57. 2 Link domains span residues 150–245 (VVFH…YCYV) and 251–347 (DVFH…YCFK). 3 N-linked (GlcNAc...) asparagine glycosylation sites follow: N330, N351, and N441. A GAG-alpha (glucosaminoglycan attachment domain) region spans residues 348–1308 (PKQNISEATT…IIEVRENKTG (961 aa)). The segment covering 625–634 (EPKTNGKVTE) has biased composition (basic and acidic residues). Residues 625-646 (EPKTNGKVTEDEFGQSQPTTTF) are disordered. Residue S660 is glycosylated (O-linked (Xyl...) (chondroitin sulfate) serine). Disordered stretches follow at residues 801–863 (WPGD…KPLE) and 881–908 (TSTS…TTST). N807 carries N-linked (GlcNAc...) asparagine glycosylation. 2 N-linked (GlcNAc...) asparagine glycosylation sites follow: N914 and N951. 2 disordered regions span residues 1010-1088 (SPGA…YPPG) and 1252-1288 (DHMT…PAAG). Composition is skewed to polar residues over residues 1017–1042 (TGVS…SSTA) and 1275–1286 (SKTQELSTSTPA). Residues N1305 and N1371 are each glycosylated (N-linked (GlcNAc...) asparagine). Positions 1309-3051 (RLSDMIVSGH…VEGTAVYLPG (1743 aa)) are GAG-beta. A compositionally biased stretch (basic and acidic residues) spans 1396–1406 (DPEAAEARRGQ). 2 disordered regions span residues 1396–1421 (DPEA…DSSA) and 1458–1524 (TYPE…AIEQ). 2 stretches are compositionally biased toward polar residues: residues 1411-1421 (APSQNFPDSSA) and 1487-1498 (WSESITESSPNL). Residues S1517 and S1599 are each glycosylated (O-linked (Xyl...) (chondroitin sulfate) serine). The segment at 1664–1705 (LPSPDARPTTVWNSNSTSEWVSDKSFEGRKKKENEDEEGAVN) is disordered. A compositionally biased stretch (polar residues) spans 1673–1683 (TVWNSNSTSEW). N1678 carries an N-linked (GlcNAc...) asparagine glycan. A compositionally biased stretch (basic and acidic residues) spans 1684–1697 (VSDKSFEGRKKKEN). O-linked (Xyl...) (chondroitin sulfate) serine glycans are attached at residues S1907 and S1931. A disordered region spans residues 1926–1965 (VGMGGSDDERVRDTQTSSSIPTTSDNIYPVPDSKGPDSTV). Residues 1939–1951 (TQTSSSIPTTSDN) are compositionally biased toward polar residues. N-linked (GlcNAc...) asparagine glycosylation is present at N2053. O-linked (Xyl...) (chondroitin sulfate) serine glycans are attached at residues S2219 and S2226. The N-linked (GlcNAc...) asparagine glycan is linked to N2243. Polar residues predominate over residues 2308–2322 (TLSHTGTEEPTTSTL). Disordered regions lie at residues 2308–2374 (TLSH…ATSP) and 2475–2494 (YPTS…EGIE). N2361 carries N-linked (GlcNAc...) asparagine glycosylation. Low complexity predominate over residues 2475–2486 (YPTSTLPSTEPY). Phosphoserine is present on residues S2585 and S2586. N2626 carries an N-linked (GlcNAc...) asparagine glycan. O-linked (Xyl...) (chondroitin sulfate) serine glycans are attached at residues S2696, S2697, and S2741. The segment at 2853–2908 (LGGNVHRTEPPSMSRDPALDVSEDESKHKLLEELETSPTKPETSQDFPNKAKDHIP) is disordered. A compositionally biased stretch (polar residues) spans 2888-2899 (TSPTKPETSQDF). Residue N3029 is glycosylated (N-linked (GlcNAc...) asparagine). One can recognise an EGF-like 1 domain in the interval 3051-3087 (GPDLCKTNPCLNGGTCYPTETSYVCTCAPGYSGDQCE). Disulfide bonds link C3055–C3066, C3060–C3075, C3077–C3086, C3093–C3104, C3098–C3113, C3115–C3124, C3131–C3142, C3159–C3251, C3227–C3243, C3258–C3301, and C3287–C3314. Residues 3089-3125 (DFDECHSNPCRNGATCVDGFNTFRCLCLPSYVGALCE) form the EGF-like 2; calcium-binding domain. Residues 3138–3252 (FQGQCYKYFA…CNYHLTYTCK (115 aa)) form the C-type lectin domain. Residues 3256–3316 (VACGQPPVVE…WAMPKITCMN (61 aa)) form the Sushi domain. N3331 and N3341 each carry an N-linked (GlcNAc...) asparagine glycan. A compositionally biased stretch (polar residues) spans 3331 to 3342 (NSSSAKDNSINT). The tract at residues 3331–3357 (NSSSAKDNSINTSKHEHRWSRRQETRR) is disordered.

This sequence belongs to the aggrecan/versican proteoglycan family. Interacts with FBLN1. Phosphorylated by FAM20C in the extracellular medium. In terms of processing, proteolytically cleaved by ADAMTS5 and ADAMTS15 in the pericellular matrix surrounding myoblasts, facilitating myoblast contact and fusion which is required for skeletal muscle development and regeneration. As to expression, expressed in the retina (at protein level). Isoform V2: Only expressed in brain.

It is found in the secreted. It localises to the extracellular space. Its subcellular location is the extracellular matrix. The protein localises to the cell projection. The protein resides in the cilium. It is found in the photoreceptor outer segment. It localises to the interphotoreceptor matrix. Its function is as follows. May play a role in intercellular signaling and in connecting cells with the extracellular matrix. May take part in the regulation of cell motility, growth and differentiation. Binds hyaluronic acid. The chain is Versican core protein (Vcan) from Mus musculus (Mouse).